Reading from the N-terminus, the 506-residue chain is Maturase K (506 aa).

The protein belongs to the intron maturase 2 family. MatK subfamily.

It localises to the plastid. Its subcellular location is the chloroplast. Its function is as follows. Usually encoded in the trnK tRNA gene intron. Probably assists in splicing its own and other chloroplast group II introns. In Trifolium striatum (Knotted clover), this protein is Maturase K.